A 166-amino-acid chain; its full sequence is Ribosome maturation factor RimM (166 aa).

The 73-residue stretch at 91–163 folds into the PRC barrel domain; that stretch reads DDGFYDHELE…TCVITPPEGL (73 aa).

It belongs to the RimM family. Binds ribosomal protein uS19.

Its subcellular location is the cytoplasm. Its function is as follows. An accessory protein needed during the final step in the assembly of 30S ribosomal subunit, possibly for assembly of the head region. Essential for efficient processing of 16S rRNA. May be needed both before and after RbfA during the maturation of 16S rRNA. It has affinity for free ribosomal 30S subunits but not for 70S ribosomes. The sequence is that of Ribosome maturation factor RimM from Corynebacterium diphtheriae (strain ATCC 700971 / NCTC 13129 / Biotype gravis).